Here is a 477-residue protein sequence, read N- to C-terminus: Glycogen synthase (477 aa).

ADP-alpha-D-glucose is bound at residue Lys-15.

It belongs to the glycosyltransferase 1 family. Bacterial/plant glycogen synthase subfamily.

The enzyme catalyses [(1-&gt;4)-alpha-D-glucosyl](n) + ADP-alpha-D-glucose = [(1-&gt;4)-alpha-D-glucosyl](n+1) + ADP + H(+). The protein operates within glycan biosynthesis; glycogen biosynthesis. In terms of biological role, synthesizes alpha-1,4-glucan chains using ADP-glucose. The chain is Glycogen synthase from Myxococcus xanthus (strain DK1622).